The primary structure comprises 65 residues: Large ribosomal subunit protein uL29 (65 aa).

Belongs to the universal ribosomal protein uL29 family.

The chain is Large ribosomal subunit protein uL29 from Acidithiobacillus ferrooxidans (strain ATCC 23270 / DSM 14882 / CIP 104768 / NCIMB 8455) (Ferrobacillus ferrooxidans (strain ATCC 23270)).